We begin with the raw amino-acid sequence, 380 residues long: Acetylornithine deacetylase (380 aa).

His-79 contacts Zn(2+). Asp-81 is a catalytic residue. Zn(2+) is bound at residue Asp-109. The active site involves Glu-139. Residues Glu-140, Glu-164, and His-351 each coordinate Zn(2+).

This sequence belongs to the peptidase M20A family. ArgE subfamily. In terms of assembly, homodimer. The cofactor is Zn(2+). Co(2+) is required as a cofactor. Requires glutathione as cofactor.

Its subcellular location is the cytoplasm. The catalysed reaction is N(2)-acetyl-L-ornithine + H2O = L-ornithine + acetate. Its pathway is amino-acid biosynthesis; L-arginine biosynthesis; L-ornithine from N(2)-acetyl-L-ornithine (linear): step 1/1. In terms of biological role, catalyzes the hydrolysis of the amide bond of N(2)-acetylated L-amino acids. Cleaves the acetyl group from N-acetyl-L-ornithine to form L-ornithine, an intermediate in L-arginine biosynthesis pathway, and a branchpoint in the synthesis of polyamines. The polypeptide is Acetylornithine deacetylase (Myxococcus xanthus).